The chain runs to 229 residues: Trehalose-6-phosphate phosphatase-related protein (229 aa).

Asp5 (nucleophile) is an active-site residue. Mg(2+) is bound by residues Asp5, Asp7, and Asp177. 5 to 7 (DYD) lines the substrate pocket.

The protein belongs to the trehalose phosphatase family. The cofactor is Mg(2+).

It catalyses the reaction alpha,alpha-trehalose 6-phosphate + H2O = alpha,alpha-trehalose + phosphate. It participates in glycan biosynthesis; trehalose biosynthesis. Functionally, removes the phosphate from trehalose 6-phosphate (Tre6P) to produce free trehalose. Also catalyzes the dephosphorylation of para-nitrophenyl phosphate (pNPP), but with lesser efficiency (in vitro). In Thermoplasma acidophilum (strain ATCC 25905 / DSM 1728 / JCM 9062 / NBRC 15155 / AMRC-C165), this protein is Trehalose-6-phosphate phosphatase-related protein.